The primary structure comprises 620 residues: Glutathione-regulated potassium-efflux system protein KefC (620 aa).

A run of 12 helical transmembrane segments spans residues 4–24 (HTLV…PIAV), 26–46 (LGLG…LWGL), 54–74 (SILH…GLEL), 90–110 (GALQ…LLGL), 114–134 (VAEL…MQAM), 149–169 (FAVL…IPLL), 178–198 (MGAF…VVLL), 218–238 (VFSA…EEVG), 270–290 (GLLL…GTLI), 294–314 (LRIV…LWLI), 327–347 (WFAV…GAAQ), and 359–379 (SLTL…VILN). One can recognise an RCK N-terminal domain in the interval 399-518 (QPRVIIAGFG…AGVEKPERET (120 aa)). Residues 597 to 620 (GWQGTEEGKHTGNMADEPETKPSS) form a disordered region.

The protein belongs to the monovalent cation:proton antiporter 2 (CPA2) transporter (TC 2.A.37) family. KefC subfamily. As to quaternary structure, homodimer. Interacts with the regulatory subunit KefF.

The protein resides in the cell inner membrane. In terms of biological role, pore-forming subunit of a potassium efflux system that confers protection against electrophiles. Catalyzes K(+)/H(+) antiport. The sequence is that of Glutathione-regulated potassium-efflux system protein KefC from Shigella flexneri serotype 5b (strain 8401).